Consider the following 149-residue polypeptide: Large ribosomal subunit protein bL9 (149 aa).

This sequence belongs to the bacterial ribosomal protein bL9 family.

Binds to the 23S rRNA. This chain is Large ribosomal subunit protein bL9, found in Thermotoga petrophila (strain ATCC BAA-488 / DSM 13995 / JCM 10881 / RKU-1).